The primary structure comprises 380 residues: Cytochrome b (380 aa).

The next 4 membrane-spanning stretches (helical) occupy residues 33 to 53 (FGSLLGLCLITQVLTGLFLAM), 77 to 98 (WLLRNIHANGASFFFICIYLHI), 113 to 133 (WNIGVLLLLLVMMTAFVGYVL), and 178 to 198 (FFTFHFLLPFIIMGATMLHLL). Residues His-83 and His-97 each contribute to the heme b site. Positions 182 and 196 each coordinate heme b. His-201 is a binding site for a ubiquinone. 4 helical membrane passes run 226–246 (YKDLLGFTILLAILSALALLN), 288–308 (LGGVLALLLSILILVVVPVLH), 320–340 (PSQTLFWILVANMLVLTWIGG), and 347–367 (FIIIGQIASVLYFMLFLILIP).

It belongs to the cytochrome b family. The cytochrome bc1 complex contains 3 respiratory subunits (MT-CYB, CYC1 and UQCRFS1), 2 core proteins (UQCRC1 and UQCRC2) and probably 6 low-molecular weight proteins. Heme b serves as cofactor.

It is found in the mitochondrion inner membrane. In terms of biological role, component of the ubiquinol-cytochrome c reductase complex (complex III or cytochrome b-c1 complex) that is part of the mitochondrial respiratory chain. The b-c1 complex mediates electron transfer from ubiquinol to cytochrome c. Contributes to the generation of a proton gradient across the mitochondrial membrane that is then used for ATP synthesis. This is Cytochrome b (mt-cyb) from Atractosteus spatula (Alligator gar).